Here is a 774-residue protein sequence, read N- to C-terminus: Shugoshin (774 aa).

The stretch at 41–105 forms a coiled coil; it reads SLRIRGLENE…AELSSLLASL (65 aa). Disordered stretches follow at residues 106-151, 205-661, and 676-774; these read GEPP…QEGR, SPSP…DAQL, and CASP…SMML. A compositionally biased stretch (basic and acidic residues) spans 109–120; it reads PSKRRLSEERRY. A compositionally biased stretch (acidic residues) spans 214–224; the sequence is AEETETTEQVE. The span at 297–318 shows a compositional bias: polar residues; it reads GDNQNEPNKATKLQQGKENGNE. Basic and acidic residues predominate over residues 382-398; it reads KGKEKVDLPAPDKKSAV. Residues 399-409 show a composition bias toward polar residues; the sequence is EETQGNSTSAF. Basic and acidic residues-rich tracts occupy residues 482 to 495 and 549 to 558; these read NLRD…KELF and FEKEKEKEPQ. Composition is skewed to polar residues over residues 595-604 and 640-651; these read PSVQEQSTLN and QSMSRSVPTIPT. Over residues 706–722 the composition is skewed to low complexity; the sequence is ASSAASTETTATASAKP. The span at 743–754 shows a compositional bias: acidic residues; it reads LAQEEEDEEDVG. The segment covering 765-774 has biased composition (basic residues); sequence RASRRRSMML.

This sequence belongs to the shugoshin family.

It localises to the nucleus. Its subcellular location is the chromosome. It is found in the centromere. Its function is as follows. Plays a central role in chromosome cohesion during cell division by preventing premature dissociation of cohesin complex from centromeres after prophase, when most of cohesin complex dissociates from chromosomes arms. The polypeptide is Shugoshin (sgo-1) (Neurospora crassa (strain ATCC 24698 / 74-OR23-1A / CBS 708.71 / DSM 1257 / FGSC 987)).